We begin with the raw amino-acid sequence, 288 residues long: Pantothenate synthetase (288 aa).

Methionine 30–histidine 37 contacts ATP. Histidine 37 acts as the Proton donor in catalysis. Glutamine 61 serves as a coordination point for (R)-pantoate. Position 61 (glutamine 61) interacts with beta-alanine. An ATP-binding site is contributed by glycine 147–aspartate 150. A (R)-pantoate-binding site is contributed by glutamine 153. ATP-binding positions include leucine 176 and isoleucine 184–arginine 187.

It belongs to the pantothenate synthetase family. Homodimer.

It is found in the cytoplasm. The catalysed reaction is (R)-pantoate + beta-alanine + ATP = (R)-pantothenate + AMP + diphosphate + H(+). Its pathway is cofactor biosynthesis; (R)-pantothenate biosynthesis; (R)-pantothenate from (R)-pantoate and beta-alanine: step 1/1. Functionally, catalyzes the condensation of pantoate with beta-alanine in an ATP-dependent reaction via a pantoyl-adenylate intermediate. This chain is Pantothenate synthetase, found in Prosthecochloris aestuarii (strain DSM 271 / SK 413).